The sequence spans 503 residues: DEAD-box ATP-dependent RNA helicase CshA (503 aa).

The Q motif signature appears at 2-30 (QNFKELGISDKTVETLEAMGFKEPTPIQK). In terms of domain architecture, Helicase ATP-binding spans 33–203 (IPYTLEGKDI…QQFMKSPQIV (171 aa)). 46–53 (AQTGTGKT) is a binding site for ATP. The DEAD box signature appears at 150–153 (DEAD). Residues 214–375 (QIDEYYTIVK…LRPPHRKEVL (162 aa)) form the Helicase C-terminal domain. The tract at residues 436–503 (EKPLARKNRQ…KGRTFADLQK (68 aa)) is disordered. The span at 466 to 480 (KRSKGNFNKKKGKKT) shows a compositional bias: basic residues. Over residues 481–490 (DRRERQDKGR) the composition is skewed to basic and acidic residues.

The protein belongs to the DEAD box helicase family. CshA subfamily. In terms of assembly, oligomerizes, may be a member of the RNA degradosome.

Its subcellular location is the cytoplasm. The catalysed reaction is ATP + H2O = ADP + phosphate + H(+). Functionally, DEAD-box RNA helicase possibly involved in RNA degradation. Unwinds dsRNA in both 5'- and 3'-directions, has RNA-dependent ATPase activity. The polypeptide is DEAD-box ATP-dependent RNA helicase CshA (Staphylococcus haemolyticus (strain JCSC1435)).